Here is a 371-residue protein sequence, read N- to C-terminus: Carbamoyl phosphate synthase small chain (371 aa).

Residues 1–190 (MRKTAILALE…LYRENEKPLV (190 aa)) are CPSase. Serine 47, glycine 237, and glycine 239 together coordinate L-glutamine. Positions 189 to 371 (LVAVIDFGVK…FKEFVKMAQG (183 aa)) constitute a Glutamine amidotransferase type-1 domain. Cysteine 264 acts as the Nucleophile in catalysis. L-glutamine-binding residues include leucine 265, glutamine 268, asparagine 306, and phenylalanine 309. Residues histidine 348 and glutamate 350 contribute to the active site.

Belongs to the CarA family. In terms of assembly, composed of two chains; the small (or glutamine) chain promotes the hydrolysis of glutamine to ammonia, which is used by the large (or ammonia) chain to synthesize carbamoyl phosphate. Tetramer of heterodimers (alpha,beta)4.

It carries out the reaction hydrogencarbonate + L-glutamine + 2 ATP + H2O = carbamoyl phosphate + L-glutamate + 2 ADP + phosphate + 2 H(+). The catalysed reaction is L-glutamine + H2O = L-glutamate + NH4(+). It functions in the pathway amino-acid biosynthesis; L-arginine biosynthesis; carbamoyl phosphate from bicarbonate: step 1/1. The protein operates within pyrimidine metabolism; UMP biosynthesis via de novo pathway; (S)-dihydroorotate from bicarbonate: step 1/3. Functionally, small subunit of the glutamine-dependent carbamoyl phosphate synthetase (CPSase). CPSase catalyzes the formation of carbamoyl phosphate from the ammonia moiety of glutamine, carbonate, and phosphate donated by ATP, constituting the first step of 2 biosynthetic pathways, one leading to arginine and/or urea and the other to pyrimidine nucleotides. The small subunit (glutamine amidotransferase) binds and cleaves glutamine to supply the large subunit with the substrate ammonia. The sequence is that of Carbamoyl phosphate synthase small chain from Aquifex aeolicus (strain VF5).